The chain runs to 672 residues: Glycerophosphocholine phosphodiesterase GPCPD1 (672 aa).

One can recognise a CBM20 domain in the interval 1–113 (MTPSQVTFEI…IIIDDGQFGI (113 aa)). Residues R68 and 86–87 (HK) each bind substrate. Phosphoserine is present on S175. One can recognise a GP-PDE domain in the interval 318 to 618 (PLDVGHRGAG…DRIYDWMPEQ (301 aa)). Y608 carries the phosphotyrosine modification.

This sequence belongs to the glycerophosphoryl diester phosphodiesterase family.

It localises to the cytoplasm. The protein localises to the cytosol. The catalysed reaction is sn-glycerol 3-phosphocholine + H2O = sn-glycerol 3-phosphate + choline + H(+). In terms of biological role, may be involved in the negative regulation of skeletal muscle differentiation, independently of its glycerophosphocholine phosphodiesterase activity. The sequence is that of Glycerophosphocholine phosphodiesterase GPCPD1 (Gpcpd1) from Rattus norvegicus (Rat).